A 186-amino-acid chain; its full sequence is ATP synthase subunit delta (186 aa).

This sequence belongs to the ATPase delta chain family. As to quaternary structure, F-type ATPases have 2 components, F(1) - the catalytic core - and F(0) - the membrane proton channel. F(1) has five subunits: alpha(3), beta(3), gamma(1), delta(1), epsilon(1). F(0) has three main subunits: a(1), b(2) and c(10-14). The alpha and beta chains form an alternating ring which encloses part of the gamma chain. F(1) is attached to F(0) by a central stalk formed by the gamma and epsilon chains, while a peripheral stalk is formed by the delta and b chains.

Its subcellular location is the cell membrane. F(1)F(0) ATP synthase produces ATP from ADP in the presence of a proton or sodium gradient. F-type ATPases consist of two structural domains, F(1) containing the extramembraneous catalytic core and F(0) containing the membrane proton channel, linked together by a central stalk and a peripheral stalk. During catalysis, ATP synthesis in the catalytic domain of F(1) is coupled via a rotary mechanism of the central stalk subunits to proton translocation. Functionally, this protein is part of the stalk that links CF(0) to CF(1). It either transmits conformational changes from CF(0) to CF(1) or is implicated in proton conduction. This chain is ATP synthase subunit delta, found in Symbiobacterium thermophilum (strain DSM 24528 / JCM 14929 / IAM 14863 / T).